The following is a 198-amino-acid chain: FMN-dependent NADH:quinone oxidoreductase (198 aa).

FMN is bound by residues S10, 16-18, 94-97, and 138-141; these read SQS, MYNF, and TRGG.

Belongs to the azoreductase type 1 family. Homodimer. Requires FMN as cofactor.

The catalysed reaction is 2 a quinone + NADH + H(+) = 2 a 1,4-benzosemiquinone + NAD(+). The enzyme catalyses N,N-dimethyl-1,4-phenylenediamine + anthranilate + 2 NAD(+) = 2-(4-dimethylaminophenyl)diazenylbenzoate + 2 NADH + 2 H(+). Quinone reductase that provides resistance to thiol-specific stress caused by electrophilic quinones. Functionally, also exhibits azoreductase activity. Catalyzes the reductive cleavage of the azo bond in aromatic azo compounds to the corresponding amines. This is FMN-dependent NADH:quinone oxidoreductase from Shewanella putrefaciens (strain CN-32 / ATCC BAA-453).